The following is a 400-amino-acid chain: Methylthioribose kinase (400 aa).

ATP-binding positions include Asn-40, Lys-57, and 111 to 113 (EDL). Position 229 (Asp-229) interacts with substrate. 246–248 (DAE) provides a ligand contact to ATP. Residue Arg-344 participates in substrate binding.

It belongs to the methylthioribose kinase family. In terms of assembly, homodimer.

It carries out the reaction 5-(methylsulfanyl)-D-ribose + ATP = 5-(methylsulfanyl)-alpha-D-ribose 1-phosphate + ADP + H(+). It participates in amino-acid biosynthesis; L-methionine biosynthesis via salvage pathway; S-methyl-5-thio-alpha-D-ribose 1-phosphate from S-methyl-5'-thioadenosine (hydrolase route): step 2/2. In terms of biological role, catalyzes the phosphorylation of methylthioribose into methylthioribose-1-phosphate. This Pectobacterium atrosepticum (strain SCRI 1043 / ATCC BAA-672) (Erwinia carotovora subsp. atroseptica) protein is Methylthioribose kinase.